A 1150-amino-acid polypeptide reads, in one-letter code: Cohesin subunit SCC3 (1150 aa).

A compositionally biased stretch (basic residues) spans Met-1–Thr-12. The segment at Met-1 to Gln-122 is disordered. Phosphoserine is present on Ser-28. The segment covering Val-32 to His-43 has biased composition (basic and acidic residues). Residues Glu-44–Val-72 are compositionally biased toward acidic residues. The segment covering Ala-77–Lys-87 has biased composition (basic residues). The stretch at Leu-305 to Gln-349 forms a coiled coil. In terms of domain architecture, SCD spans Phe-367 to Val-457. Ser-628 is subject to Phosphoserine. The segment at Glu-1065–Asp-1150 is disordered. The segment covering Gln-1083–Asn-1101 has biased composition (basic and acidic residues).

It belongs to the SCC3 family. As to quaternary structure, interacts directly with MCD1 in cohesin complex. Cohesin complexes are composed of the SMC1 and SMC3 heterodimer attached via their hinge domain, MCD1 which link them, and IRR1/SCC3, which interacts with MCD1. The cohesin complex also interacts with SCC2, which is required for its association with chromosomes. Interacts with LIN1. Post-translationally, acetylated by ECO1.

The protein localises to the nucleus. It is found in the chromosome. Its subcellular location is the centromere. Its function is as follows. Component of cohesin complex, a complex required for the cohesion of sister chromatids after DNA replication. The cohesin complex apparently forms a large proteinaceous ring within which sister chromatids can be trapped. At anaphase, the MCD1/SCC1 subunit of the complex is cleaved and dissociates from chromatin, allowing sister chromatids to segregate. The cohesin complex may also play a role in spindle pole assembly during mitosis. The protein is Cohesin subunit SCC3 (IRR1) of Saccharomyces cerevisiae (strain ATCC 204508 / S288c) (Baker's yeast).